We begin with the raw amino-acid sequence, 195 residues long: dCTP deaminase (195 aa).

DCTP-binding positions include 109-114, Asp-127, 135-137, Tyr-170, Lys-177, and Gln-181; these read RSSLAR and TLE. Glu-137 acts as the Proton donor/acceptor in catalysis.

It belongs to the dCTP deaminase family. Homotrimer.

It carries out the reaction dCTP + H2O + H(+) = dUTP + NH4(+). It participates in pyrimidine metabolism; dUMP biosynthesis; dUMP from dCTP (dUTP route): step 1/2. Its function is as follows. Catalyzes the deamination of dCTP to dUTP. The polypeptide is dCTP deaminase (Rhodospirillum rubrum (strain ATCC 11170 / ATH 1.1.1 / DSM 467 / LMG 4362 / NCIMB 8255 / S1)).